Here is a 141-residue protein sequence, read N- to C-terminus: Protein E6 (141 aa).

2 zinc fingers span residues 27–64 (CRFC…CSSC) and 101–137 (CQYC…CRHC).

Belongs to the papillomaviridae E6 protein family. In terms of assembly, forms homodimers. Interacts with ubiquitin-protein ligase UBE3A/E6-AP; this interaction stimulates UBE3A ubiquitin activity. Interacts with host BAK1.

Its subcellular location is the host cytoplasm. The protein localises to the host nucleus. Plays a major role in the induction and maintenance of cellular transformation. E6 associates with host UBE3A/E6-AP ubiquitin-protein ligase and modulates its activity. Protects host keratinocytes from apoptosis by mediating the degradation of host BAK1. May also inhibit host immune response. The chain is Protein E6 from Homo sapiens (Human).